A 113-amino-acid chain; its full sequence is Large ribosomal subunit protein uL24 (113 aa).

Belongs to the universal ribosomal protein uL24 family. Part of the 50S ribosomal subunit.

One of two assembly initiator proteins, it binds directly to the 5'-end of the 23S rRNA, where it nucleates assembly of the 50S subunit. In terms of biological role, one of the proteins that surrounds the polypeptide exit tunnel on the outside of the subunit. In Synechococcus elongatus (strain ATCC 33912 / PCC 7942 / FACHB-805) (Anacystis nidulans R2), this protein is Large ribosomal subunit protein uL24.